Consider the following 474-residue polypeptide: Ankyrin repeat, SAM and basic leucine zipper domain-containing protein 1 (474 aa).

The disordered stretch occupies residues 1-31 (MAGRLRGPAVPGGGESSDSDEDGWDIGYTER). Residues Ser-16, Ser-17, and Ser-19 each carry the phosphoserine modification. ANK repeat units follow at residues 43–72 (EKDEVLKRALTTGDGSLLEELLNSGMQVDS), 76–105 (FGWTPLMYAASIANVDLVRILLDRGANASF), 108–142 (DQHTVLMAACSARVPEERILKTAELLLSRNASPNA), 146–175 (KRMSPLMYAAREGHSQLVALLVGHGAEINA), 179–208 (NGYTALAWAARHGHKTTVLKLLELGADKTL), and 212–241 (DGKTPAEIAKRNKHPELFSMLSLTLNPLHG). In terms of domain architecture, SAM spans 270–333 (SYSAFGDLEI…KIMDAVEELQ (64 aa)).

Interacts with DDX4, PIWIL1, RANBP9 and TDRD1.

The protein resides in the cytoplasm. Plays a central role during spermatogenesis by repressing transposable elements and preventing their mobilization, which is essential for the germline integrity. Acts via the piRNA metabolic process, which mediates the repression of transposable elements during meiosis by forming complexes composed of piRNAs and Piwi proteins and governs the methylation and subsequent repression of transposons. Its association with pi-bodies suggests a participation in the primary piRNAs metabolic process. Required prior to the pachytene stage to facilitate the production of multiple types of piRNAs, including those associated with repeats involved in the regulation of retrotransposons. May act by mediating protein-protein interactions during germ cell maturation. In Ornithorhynchus anatinus (Duckbill platypus), this protein is Ankyrin repeat, SAM and basic leucine zipper domain-containing protein 1 (ASZ1).